Reading from the N-terminus, the 95-residue chain is Small ribosomal subunit protein bS18 (95 aa).

It belongs to the bacterial ribosomal protein bS18 family. Part of the 30S ribosomal subunit. Forms a tight heterodimer with protein bS6.

Its function is as follows. Binds as a heterodimer with protein bS6 to the central domain of the 16S rRNA, where it helps stabilize the platform of the 30S subunit. This Rickettsia africae (strain ESF-5) protein is Small ribosomal subunit protein bS18.